The following is a 296-amino-acid chain: 4-hydroxy-tetrahydrodipicolinate synthase (296 aa).

Thr49 contributes to the pyruvate binding site. Tyr137 functions as the Proton donor/acceptor in the catalytic mechanism. Catalysis depends on Lys165, which acts as the Schiff-base intermediate with substrate. Val207 is a binding site for pyruvate.

This sequence belongs to the DapA family. Homotetramer; dimer of dimers.

The protein resides in the cytoplasm. It carries out the reaction L-aspartate 4-semialdehyde + pyruvate = (2S,4S)-4-hydroxy-2,3,4,5-tetrahydrodipicolinate + H2O + H(+). It functions in the pathway amino-acid biosynthesis; L-lysine biosynthesis via DAP pathway; (S)-tetrahydrodipicolinate from L-aspartate: step 3/4. Catalyzes the condensation of (S)-aspartate-beta-semialdehyde [(S)-ASA] and pyruvate to 4-hydroxy-tetrahydrodipicolinate (HTPA). The chain is 4-hydroxy-tetrahydrodipicolinate synthase from Nitrobacter hamburgensis (strain DSM 10229 / NCIMB 13809 / X14).